Consider the following 467-residue polypeptide: 5-phosphohydroxy-L-lysine phospho-lyase (467 aa).

Lys278 carries the post-translational modification N6-(pyridoxal phosphate)lysine.

Belongs to the class-III pyridoxal-phosphate-dependent aminotransferase family. As to quaternary structure, homotetramer. Pyridoxal 5'-phosphate is required as a cofactor.

It localises to the mitochondrion. It carries out the reaction (5R)-5-phosphooxy-L-lysine + H2O = (S)-2-amino-6-oxohexanoate + NH4(+) + phosphate. In terms of biological role, catalyzes the pyridoxal-phosphate-dependent breakdown of 5-phosphohydroxy-L-lysine, converting it to ammonia, inorganic phosphate and 2-aminoadipate semialdehyde. In Mus musculus (Mouse), this protein is 5-phosphohydroxy-L-lysine phospho-lyase (Phykpl).